The sequence spans 471 residues: A-type ATP synthase subunit B (471 aa).

This sequence belongs to the ATPase alpha/beta chains family. As to quaternary structure, has multiple subunits with at least A(3), B(3), C, D, E, F, H, I and proteolipid K(x).

The protein localises to the cell membrane. Component of the A-type ATP synthase that produces ATP from ADP in the presence of a proton gradient across the membrane. The B chain is a regulatory subunit. The protein is A-type ATP synthase subunit B of Ignicoccus hospitalis (strain KIN4/I / DSM 18386 / JCM 14125).